The sequence spans 702 residues: Polyribonucleotide nucleotidyltransferase (702 aa).

Residues Asp485 and Asp491 each coordinate Mg(2+). One can recognise a KH domain in the interval 552-611 (PKTSTLQIDPEKIRDVIGAGGKVINKIIADTGVKIDIKEDGLVYVSSAESEGVKEAVKII). The 69-residue stretch at 621 to 689 (GEIYLGKVTK…SQGRINLSRK (69 aa)) folds into the S1 motif domain.

It belongs to the polyribonucleotide nucleotidyltransferase family. Requires Mg(2+) as cofactor.

It is found in the cytoplasm. It carries out the reaction RNA(n+1) + phosphate = RNA(n) + a ribonucleoside 5'-diphosphate. Its function is as follows. Involved in mRNA degradation. Catalyzes the phosphorolysis of single-stranded polyribonucleotides processively in the 3'- to 5'-direction. This chain is Polyribonucleotide nucleotidyltransferase, found in Clostridium perfringens (strain 13 / Type A).